Consider the following 217-residue polypeptide: Adenylate kinase (217 aa).

10 to 15 (GAGKGT) serves as a coordination point for ATP. Residues 30-59 (STGDIFRSNVSQGTPLGVQAKRYMDAGELV) are NMP. AMP contacts are provided by residues Thr31, Arg36, 57–59 (ELV), 85–88 (GFPR), and Gln92. The interval 126-163 (GRRTCRGCGKVWHVEFDAPSQEGRCDRCGAELFQRDDD) is LID. Position 127 (Arg127) interacts with ATP. 4 residues coordinate Zn(2+): Cys130, Cys133, Cys150, and Cys153. Positions 160 and 171 each coordinate AMP. Gly199 provides a ligand contact to ATP.

This sequence belongs to the adenylate kinase family. Monomer.

The protein localises to the cytoplasm. The enzyme catalyses AMP + ATP = 2 ADP. Its pathway is purine metabolism; AMP biosynthesis via salvage pathway; AMP from ADP: step 1/1. Catalyzes the reversible transfer of the terminal phosphate group between ATP and AMP. Plays an important role in cellular energy homeostasis and in adenine nucleotide metabolism. In Salinispora tropica (strain ATCC BAA-916 / DSM 44818 / JCM 13857 / NBRC 105044 / CNB-440), this protein is Adenylate kinase.